Consider the following 164-residue polypeptide: MDMTNAQRLILSNQYKMMTMLDPENAERYRRQQTIVERGFGLQMRELDRDFGEMSEDTCRTIINIMEMHHALQVSWGNLKEKQDLDERRISFLGFDAATESRYLSYVRFMVNTEGRYTHFDSGTHGFNSQTPMWDKYQRMLAIWQSCPRQYHLSAVEISQIINA.

It belongs to the UPF0304 family.

In Yersinia pestis (strain Pestoides F), this protein is UPF0304 protein YPDSF_1971.